The sequence spans 1052 residues: Mediator of RNA polymerase II transcription subunit 5 (1052 aa).

Positions 949–982 (GGDDEQREQHQQQQPDADQSNQGVVAPTGNTPGN) are disordered. Over residues 959-970 (QQQQPDADQSNQ) the composition is skewed to low complexity.

It belongs to the Mediator complex subunit 5 family. Component of the Mediator complex.

It is found in the nucleus. Its function is as follows. Component of the Mediator complex, a coactivator involved in the regulated transcription of nearly all RNA polymerase II-dependent genes. Mediator functions as a bridge to convey information from gene-specific regulatory proteins to the basal RNA polymerase II transcription machinery. Mediator is recruited to promoters by direct interactions with regulatory proteins and serves as a scaffold for the assembly of a functional preinitiation complex with RNA polymerase II and the general transcription factors. In Coccidioides immitis (strain RS) (Valley fever fungus), this protein is Mediator of RNA polymerase II transcription subunit 5 (NUT1).